The sequence spans 886 residues: MQQGYQLDDRPYGRPEQLDYPQTGPSPGAVPGRYGTPSDQLQLNAAQSVDNLSRNSPFADPHQRGPYQTDYAVNPEAHHDAYYNQPYEPTPMEGTPLGYDPGQPGYDHDDLRPMLPHQDSHASEPYQDQPTPQGAGGGIKRWKTVKQVLLYRGNLVLDCPVPPRLLNQLPHGERDEFTHMRYSAATCDPDHFYEENFTLRQRLFSKPRHTELFIVVTMYNEDEILFARSMIGVFKNIEYMCNRKESKTWGKDAWKKIVVCVVSDGRSKINPRTRALLAGMGVYQEGIAKQQVNGKDVTSHIYEYTTQVGMRIEKGVVQLVPKQQPVQILFCLKEKNQKKINSHRWFFSAFGRVLDPNICVLLDAGTKPGGNSIYHLWKAFDLEPMCAGACGEIKAMLGTGGKNLLNPLIATQNFEYKMSNILDKPLESAFGFISVLPGAFSAYRYVALQNDKKGQGPLEKYFAGETLHGSDAGIFESNMYLAEDRILCFELVTKRNCHWILQYVKSATGETDVPDTVTELVLQRRRWLNGSFFAAIYAIAHFYQFFRSDHSFLRKVMLFIEFIFHTINMVFAWFAVGNFFLVFSILTKSLGGDELLGRTGEILGVVFTWLYGVALFTCFVLSMGNRPSGSRWYYTTMVYFWAIIMVYLMFAAIFIAVKAIMADVNDGTPFSLGELFRNPVFYTLIVSVMSTYGIWFLASFLMFDPWHMFTSFVQYMLLTPTYINILNVYAFCNTHDISWGTKGDDQAEKLPSVSTKDGSGKTDLPDESDLNAQYERELTAFGSKPIKVVHTPTEAQRAEAQMDYYRGVRSITVLAWMITNFGLAAVVLSAAGLDRIDPKHQTAEEEDPNARANIYMTVVLWSVAGLAAFKFIGAMWFLVVRMFRGV.

Disordered stretches follow at residues 1–70 (MQQG…YQTD) and 86–138 (PYEP…AGGG). Residues 7-17 (LDDRPYGRPEQ) are compositionally biased toward basic and acidic residues. Residues 37 to 56 (PSDQLQLNAAQSVDNLSRNS) show a composition bias toward polar residues. The N-linked (GlcNAc...) asparagine glycan is linked to asparagine 51. Residues 106–122 (YDHDDLRPMLPHQDSHA) are compositionally biased toward basic and acidic residues. N-linked (GlcNAc...) asparagine glycosylation occurs at asparagine 196. Transmembrane regions (helical) follow at residues 428 to 448 (SAFG…YVAL), 526 to 546 (RWLN…YQFF), 556 to 576 (VMLF…WFAV), 602 to 622 (ILGV…FVLS), 637 to 657 (MVYF…FIAV), 683 to 703 (TLIV…FLMF), and 712 to 732 (FVQY…YAFC). Residues 745–768 (DQAEKLPSVSTKDGSGKTDLPDES) are disordered. A run of 2 helical transmembrane segments spans residues 813 to 833 (VLAW…AAGL) and 858 to 878 (VVLW…MWFL).

Belongs to the chitin synthase family. Class I subfamily.

The protein localises to the cell membrane. The enzyme catalyses [(1-&gt;4)-N-acetyl-beta-D-glucosaminyl](n) + UDP-N-acetyl-alpha-D-glucosamine = [(1-&gt;4)-N-acetyl-beta-D-glucosaminyl](n+1) + UDP + H(+). In terms of biological role, polymerizes chitin, a structural polymer of the cell wall and septum, by transferring the sugar moiety of UDP-GlcNAc to the non-reducing end of the growing chitin polymer. Involved in tolerance to hyperosmotic conditions. CHS3 is the only V.dahliae chitin synthase that is not involved in virulence. In Verticillium dahliae (strain VdLs.17 / ATCC MYA-4575 / FGSC 10137) (Verticillium wilt), this protein is Chitin synthase 3.